The sequence spans 468 residues: 6-phospho-beta-galactosidase 2 (468 aa).

Residues Q19, H116, N159, E160, and N297 each contribute to the D-galactose 6-phosphate site. The Proton donor role is filled by E160. The active-site Nucleophile is E375. Residues S428, W429, K435, and Y437 each coordinate D-galactose 6-phosphate.

Belongs to the glycosyl hydrolase 1 family.

The catalysed reaction is a 6-phospho-beta-D-galactoside + H2O = D-galactose 6-phosphate + an alcohol. The protein operates within carbohydrate metabolism; lactose degradation; D-galactose 6-phosphate and beta-D-glucose from lactose 6-phosphate: step 1/1. The polypeptide is 6-phospho-beta-galactosidase 2 (Streptococcus pneumoniae (strain ATCC BAA-255 / R6)).